The following is a 357-amino-acid chain: DnaJ homolog subfamily C member 25 (357 aa).

The helical transmembrane segment at 19–39 threads the bilayer; the sequence is WLLLAPLLLVPLLARPAEALV. The region spanning 48-121 is the J domain; sequence DCYEVLGVSR…ETRKDYDYML (74 aa). The next 2 helical transmembrane spans lie at 147-167 and 241-261; these read VVIL…WWNS and LLLF…AWYC.

This sequence belongs to the DNAJC25 family.

The protein resides in the membrane. This is DnaJ homolog subfamily C member 25 (Dnajc25) from Mus musculus (Mouse).